We begin with the raw amino-acid sequence, 356 residues long: Phosphoribosylformylglycinamidine cyclo-ligase (356 aa).

It belongs to the AIR synthase family.

The protein resides in the cytoplasm. The enzyme catalyses 2-formamido-N(1)-(5-O-phospho-beta-D-ribosyl)acetamidine + ATP = 5-amino-1-(5-phospho-beta-D-ribosyl)imidazole + ADP + phosphate + H(+). Its pathway is purine metabolism; IMP biosynthesis via de novo pathway; 5-amino-1-(5-phospho-D-ribosyl)imidazole from N(2)-formyl-N(1)-(5-phospho-D-ribosyl)glycinamide: step 2/2. This is Phosphoribosylformylglycinamidine cyclo-ligase from Rhizobium meliloti (strain 1021) (Ensifer meliloti).